The chain runs to 576 residues: N-acetylmuramoyl-L-alanine amidase (576 aa).

An N-terminal signal peptide occupies residues 1–21 (MAQGVLWILLGLLLWSDPGTA). N-linked (GlcNAc...) asparagine glycosylation occurs at Asn-77. Ser-239 is modified (phosphoserine). A deamidated asparagine mark is found at Asn-274 and Asn-322. Asn-367 is a glycosylation site (N-linked (GlcNAc...) asparagine). The 127-residue stretch at 406 to 532 (FLYVHHTYVP…RQLVRTDCPG (127 aa)) folds into the N-acetylmuramoyl-L-alanine amidase domain. Position 410 (His-410) interacts with Zn(2+). An intrachain disulfide couples Cys-419 to Cys-425. A glycan (N-linked (GlcNAc...) asparagine) is linked at Asn-485. Residues His-522 and Cys-530 each coordinate Zn(2+). The interval 550–576 (KPRPARSVSKRSRREPPPRTLPATDLQ) is disordered.

The protein belongs to the N-acetylmuramoyl-L-alanine amidase 2 family. Zn(2+) serves as cofactor. As to expression, strongly expressed in liver and fetal liver, and secreted into serum. Expressed to a much lesser extent in transverse colon, lymph nodes, heart, thymus, pancreas, descending colon, stomach and testis. Isoform 2 is not detected in the liver or serum.

Its subcellular location is the secreted. It is found in the membrane. It carries out the reaction Hydrolyzes the link between N-acetylmuramoyl residues and L-amino acid residues in certain cell-wall glycopeptides.. Its function is as follows. May play a scavenger role by digesting biologically active peptidoglycan (PGN) into biologically inactive fragments. Has no direct bacteriolytic activity. This Homo sapiens (Human) protein is N-acetylmuramoyl-L-alanine amidase (PGLYRP2).